Consider the following 121-residue polypeptide: UPF0102 protein Mvan_2202 (121 aa).

It belongs to the UPF0102 family.

This Mycolicibacterium vanbaalenii (strain DSM 7251 / JCM 13017 / BCRC 16820 / KCTC 9966 / NRRL B-24157 / PYR-1) (Mycobacterium vanbaalenii) protein is UPF0102 protein Mvan_2202.